The primary structure comprises 174 residues: Large ribosomal subunit protein uL5 (174 aa).

Belongs to the universal ribosomal protein uL5 family. Part of the 50S ribosomal subunit; contacts the 5S rRNA and probably tRNA. Forms a bridge to the 30S subunit in the 70S ribosome.

In terms of biological role, this is one of the proteins that bind and probably mediate the attachment of the 5S RNA into the large ribosomal subunit, where it forms part of the central protuberance. In the 70S ribosome it contacts protein S13 of the 30S subunit (bridge B1b), connecting the 2 subunits; this bridge is implicated in subunit movement. May contact the P site tRNA; the 5S rRNA and some of its associated proteins might help stabilize positioning of ribosome-bound tRNAs. The chain is Large ribosomal subunit protein uL5 from Halorubrum lacusprofundi (strain ATCC 49239 / DSM 5036 / JCM 8891 / ACAM 34).